We begin with the raw amino-acid sequence, 439 residues long: Maintenance of mitochondrial morphology protein 1 (439 aa).

Residues 1 to 76 (MSQDLIETTA…NGNTWSFTQG (76 aa)) lie on the Lumenal side of the membrane. The helical transmembrane segment at 77 to 97 (LVIGQVSVIFIIIVFVKFFVF) threads the bilayer. Residues 98 to 439 (ADSSSHIPTK…TPGEYVNSNI (342 aa)) are Cytoplasmic-facing. Disordered regions lie at residues 125–145 (KHSN…SLDS), 309–336 (MNGY…DGGT), and 405–425 (REPV…GTSA). Residues 165 to 395 (ASESLDWFNV…EPRFQVVRLP (231 aa)) form the SMP-LTD domain. Low complexity-rich tracts occupy residues 315-326 (ENANGDGASSSN) and 410-424 (KKTT…NGTS).

The protein belongs to the MMM1 family. In terms of assembly, homodimer. Component of the ER-mitochondria encounter structure (ERMES) or MDM complex, composed of MMM1, MDM10, MDM12 and MDM34. An MMM1 homodimer associates with one molecule of MDM12 on each side in a pairwise head-to-tail manner, and the SMP-LTD domains of MMM1 and MDM12 generate a continuous hydrophobic tunnel for phospholipid trafficking.

Its subcellular location is the endoplasmic reticulum membrane. Functionally, component of the ERMES/MDM complex, which serves as a molecular tether to connect the endoplasmic reticulum (ER) and mitochondria. Components of this complex are involved in the control of mitochondrial shape and protein biogenesis, and function in nonvesicular lipid trafficking between the ER and mitochondria. The MDM12-MMM1 subcomplex functions in the major beta-barrel assembly pathway that is responsible for biogenesis of all outer membrane beta-barrel proteins, and acts in a late step after the SAM complex. The MDM10-MDM12-MMM1 subcomplex further acts in the TOM40-specific pathway after the action of the MDM12-MMM1 complex. Essential for establishing and maintaining the structure of mitochondria and maintenance of mtDNA nucleoids. The protein is Maintenance of mitochondrial morphology protein 1 of Candida albicans (strain SC5314 / ATCC MYA-2876) (Yeast).